The chain runs to 355 residues: NADH dehydrogenase [ubiquinone] 1 alpha subcomplex subunit 10, mitochondrial (355 aa).

A mitochondrion-targeting transit peptide spans 1–35 (MALRLLKLAATSASARVVAAGAQRVRGIHSSVQCK). Ser250 is modified (phosphoserine; by PINK1). Lys285 bears the N6-succinyllysine mark.

Belongs to the complex I NDUFA10 subunit family. As to quaternary structure, complex I is composed of 45 different subunits. This a component of the hydrophobic protein fraction. It depends on FAD as a cofactor. Phosphorylation at Ser-250 by PINK1 is required for the binding and/or reduction of the complex I substrate ubiquinone.

The protein localises to the mitochondrion matrix. In terms of biological role, accessory subunit of the mitochondrial membrane respiratory chain NADH dehydrogenase (Complex I), that is believed not to be involved in catalysis. Complex I functions in the transfer of electrons from NADH to the respiratory chain. The immediate electron acceptor for the enzyme is believed to be ubiquinone. The sequence is that of NADH dehydrogenase [ubiquinone] 1 alpha subcomplex subunit 10, mitochondrial (NDUFA10) from Homo sapiens (Human).